Consider the following 368-residue polypeptide: 3-dehydroquinate synthase (368 aa).

Residues 131-132, Lys-144, and Lys-153 each bind NAD(+); that span reads TT. Residues Glu-186, His-249, and His-267 each contribute to the Zn(2+) site.

The protein belongs to the sugar phosphate cyclases superfamily. Dehydroquinate synthase family. Co(2+) is required as a cofactor. Requires Zn(2+) as cofactor. The cofactor is NAD(+).

The protein localises to the cytoplasm. The catalysed reaction is 7-phospho-2-dehydro-3-deoxy-D-arabino-heptonate = 3-dehydroquinate + phosphate. The protein operates within metabolic intermediate biosynthesis; chorismate biosynthesis; chorismate from D-erythrose 4-phosphate and phosphoenolpyruvate: step 2/7. Functionally, catalyzes the conversion of 3-deoxy-D-arabino-heptulosonate 7-phosphate (DAHP) to dehydroquinate (DHQ). The protein is 3-dehydroquinate synthase of Pelagibacter ubique (strain HTCC1062).